Here is a 210-residue protein sequence, read N- to C-terminus: Ribonuclease HII (210 aa).

The region spanning 17–206 is the RNase H type-2 domain; it reads DIICGVDEAG…VRALLGGVTP (190 aa). A divalent metal cation-binding residues include Asp23, Glu24, and Asp115.

It belongs to the RNase HII family. It depends on Mn(2+) as a cofactor. Mg(2+) is required as a cofactor.

The protein resides in the cytoplasm. It carries out the reaction Endonucleolytic cleavage to 5'-phosphomonoester.. In terms of biological role, endonuclease that specifically degrades the RNA of RNA-DNA hybrids. The chain is Ribonuclease HII from Janthinobacterium sp. (strain Marseille) (Minibacterium massiliensis).